A 278-amino-acid chain; its full sequence is Energy-coupling factor transporter ATP-binding protein EcfA1 (278 aa).

The ABC transporter domain maps to 5 to 240 (IEVRNLKYKY…EDLEELGLDQ (236 aa)). 40-47 (GHNGSGKS) contributes to the ATP binding site.

Belongs to the ABC transporter superfamily. Energy-coupling factor EcfA family. As to quaternary structure, forms a stable energy-coupling factor (ECF) transporter complex composed of 2 membrane-embedded substrate-binding proteins (S component), 2 ATP-binding proteins (A component) and 2 transmembrane proteins (T component).

The protein resides in the cell membrane. ATP-binding (A) component of a common energy-coupling factor (ECF) ABC-transporter complex. Unlike classic ABC transporters this ECF transporter provides the energy necessary to transport a number of different substrates. The polypeptide is Energy-coupling factor transporter ATP-binding protein EcfA1 (Streptococcus sanguinis (strain SK36)).